The following is a 384-amino-acid chain: WD repeat-containing protein 55 (384 aa).

The disordered stretch occupies residues 1–33 (MDPTCQESPAEDSNNEEDLDSTKAAPRIRDTPE). Residues 9–19 (PAEDSNNEEDL) are compositionally biased toward acidic residues. WD repeat units lie at residues 36 to 75 (VLEA…GETK), 82 to 121 (HHLK…LERR), 125 to 163 (AHSA…PLMD), 166 to 205 (QHEE…FELL), 208 to 247 (PQSG…ATSD), 250 to 289 (ALRA…VVGT), and 293 to 332 (HAGE…TVVV). Residues Ser354 and Ser383 each carry the phosphoserine modification. The disordered stretch occupies residues 362-384 (LREDEEEAKAPEEVSGESDDDSD). Over residues 375 to 384 (VSGESDDDSD) the composition is skewed to acidic residues.

The protein belongs to the WD repeat WDR55 family.

The protein localises to the nucleus. Its subcellular location is the nucleolus. It localises to the cytoplasm. In terms of biological role, nucleolar protein that acts as a modulator of rRNA synthesis. Plays a central role during organogenesis. The sequence is that of WD repeat-containing protein 55 (Wdr55) from Rattus norvegicus (Rat).